The following is a 743-amino-acid chain: Catalase-peroxidase (743 aa).

The span at 1 to 15 (MSSDSRPPQPDTSTQ) shows a compositional bias: polar residues. The interval 1-40 (MSSDSRPPQPDTSTQSNSESESPAISSPTPQDHAPMTNRD) is disordered. Positions 16 to 28 (SNSESESPAISSP) are enriched in low complexity. Residues 110 to 233 (WHAAGTYRIQ…YGATTMGLIY (124 aa)) constitute a cross-link (tryptophyl-tyrosyl-methioninium (Trp-Tyr) (with M-259)). His-111 acts as the Proton acceptor in catalysis. Residues 233–259 (YVNPEGPEGKPDPVAAAHDIRETFARM) constitute a cross-link (tryptophyl-tyrosyl-methioninium (Tyr-Met) (with W-110)). A heme b-binding site is contributed by His-274. The segment at 490–511 (DKRGGANGGRLRLEPQKSWESN) is disordered.

This sequence belongs to the peroxidase family. Peroxidase/catalase subfamily. In terms of assembly, homodimer or homotetramer. Heme b serves as cofactor. Formation of the three residue Trp-Tyr-Met cross-link is important for the catalase, but not the peroxidase activity of the enzyme.

It catalyses the reaction H2O2 + AH2 = A + 2 H2O. The catalysed reaction is 2 H2O2 = O2 + 2 H2O. Bifunctional enzyme with both catalase and broad-spectrum peroxidase activity. In Mycobacterium marinum (strain ATCC BAA-535 / M), this protein is Catalase-peroxidase.